A 1201-amino-acid chain; its full sequence is Zinc finger protein sdc-1 (1201 aa).

C2H2-type zinc fingers lie at residues 117–139 (LTCAHCDWSFDNVMKLVRHRGVH), 145–168 (YMCQVCLTLFGHTYNLFMHWRTSC), 233–254 (SSCHLCHLPVPNKFLEAHGNVH), 268–290 (YFCHICGTVFIEQDNLFKHWRLH), 486–513 (IVCHKCDSKKLTITFSTEVRLKYHLLRH), 521–543 (YHCAICKIIVYNRSHEEHWINDC), and 652–674 (VVCFHCGTRCHYTLLHDHLDYCH). The disordered stretch occupies residues 1164-1201 (KRRNSETREHELIELDTDDLNEPSTSDGRYSFGHHGYR). Residues 1167-1176 (NSETREHELI) show a composition bias toward basic and acidic residues.

Component of the SDC complex, which consists of sdc-1, sdc-2 and sdc-3. Within the complex, interacts with sdc-2 and sdc-3.

Its subcellular location is the nucleus. It localises to the chromosome. Functionally, embryonic transcription factor regulating downstream genes involved specifically in the sex determination and dosage compensation pathways, or regulating other genes involved in the coordinate control of both processes. Component of the SDC complex that functions in sex determination and in X chromosome dosage compensation specifically in hermaphrodite (XX) animals. Involved in the recruitment of the condensin I-like dosage compensation complex to the male sex-determining autosomal gene her-1, thereby contributing to its repression and initiating hermaphrodite sexual development. Similarly, might contribute to X-linked gene repression through recruitment of the dosage compensation complex to the X chromosomes in hermaphrodites. Seems to be involved in the depletion of histone H4 lysine 16 acetylation (H4K16ac) on dosage compensated X chromosomes. Plays a role in developmental rate and body fat regulation downstream of the TOR complex 2 pathway. This chain is Zinc finger protein sdc-1 (sdc-1), found in Caenorhabditis elegans.